The following is a 613-amino-acid chain: RUN domain-containing protein 1 (613 aa).

A disordered region spans residues 15–36 (AAVGPKAKDEEEEEEEPLPPCE). Thr54 is modified (phosphothreonine). The segment covering 57-69 (LEEATAEEPGAAP) has biased composition (low complexity). Disordered regions lie at residues 57-79 (LEEA…PGRT), 140-177 (YEGP…RLET), and 305-330 (GKTG…KAED). Phosphoserine occurs at positions 71 and 75. Residues 159–177 (PWLRGEDQSEQEKQERLET) show a composition bias toward basic and acidic residues. Residues 160–235 (WLRGEDQSEQ…IKKLDMNLNE (76 aa)) are a coiled coil. Residues 309–325 (NGCSRTGSSRTPPGNSK) show a composition bias toward polar residues. The RUN domain maps to 421 to 602 (ELTMAVRKEL…LKFSLPVDLA (182 aa)). At Ser497 the chain carries Phosphoserine.

Its function is as follows. May play a role as p53/TP53 inhibitor and thus may have oncogenic activity. This is RUN domain-containing protein 1 (RUNDC1) from Homo sapiens (Human).